Consider the following 97-residue polypeptide: Small ribosomal subunit protein bS20 (97 aa).

This sequence belongs to the bacterial ribosomal protein bS20 family.

Its function is as follows. Binds directly to 16S ribosomal RNA. This chain is Small ribosomal subunit protein bS20, found in Synechocystis sp. (strain ATCC 27184 / PCC 6803 / Kazusa).